Reading from the N-terminus, the 105-residue chain is Small ribosomal subunit protein uS10 (105 aa).

This sequence belongs to the universal ribosomal protein uS10 family. In terms of assembly, part of the 30S ribosomal subunit.

Involved in the binding of tRNA to the ribosomes. The protein is Small ribosomal subunit protein uS10 of Chlamydia abortus (strain DSM 27085 / S26/3) (Chlamydophila abortus).